The primary structure comprises 301 residues: tRNA dimethylallyltransferase (301 aa).

Glycine 8–serine 15 is an ATP binding site. Residue threonine 10–serine 15 participates in substrate binding. The interaction with substrate tRNA stretch occupies residues aspartate 33–glutamine 36.

The protein belongs to the IPP transferase family. Monomer. It depends on Mg(2+) as a cofactor.

It catalyses the reaction adenosine(37) in tRNA + dimethylallyl diphosphate = N(6)-dimethylallyladenosine(37) in tRNA + diphosphate. Its function is as follows. Catalyzes the transfer of a dimethylallyl group onto the adenine at position 37 in tRNAs that read codons beginning with uridine, leading to the formation of N6-(dimethylallyl)adenosine (i(6)A). The sequence is that of tRNA dimethylallyltransferase from Tropheryma whipplei (strain Twist) (Whipple's bacillus).